The sequence spans 403 residues: Acetylornithine aminotransferase (403 aa).

Residues 107–108 and phenylalanine 140 contribute to the pyridoxal 5'-phosphate site; that span reads GA. Arginine 143 serves as a coordination point for N(2)-acetyl-L-ornithine. Pyridoxal 5'-phosphate is bound at residue 225-228; sequence DEVQ. N6-(pyridoxal phosphate)lysine is present on lysine 254. Serine 282 contacts N(2)-acetyl-L-ornithine. Position 283 (threonine 283) interacts with pyridoxal 5'-phosphate.

Belongs to the class-III pyridoxal-phosphate-dependent aminotransferase family. ArgD subfamily. Homodimer. Pyridoxal 5'-phosphate is required as a cofactor.

The protein resides in the cytoplasm. The enzyme catalyses N(2)-acetyl-L-ornithine + 2-oxoglutarate = N-acetyl-L-glutamate 5-semialdehyde + L-glutamate. The protein operates within amino-acid biosynthesis; L-arginine biosynthesis; N(2)-acetyl-L-ornithine from L-glutamate: step 4/4. This chain is Acetylornithine aminotransferase, found in Vibrio vulnificus (strain YJ016).